The sequence spans 150 residues: Transcriptional regulator MraZ (150 aa).

2 SpoVT-AbrB domains span residues 7-55 (SHAI…PEPE) and 84-127 (AALM…SEES).

This sequence belongs to the MraZ family. In terms of assembly, forms oligomers.

It is found in the cytoplasm. The protein localises to the nucleoid. The sequence is that of Transcriptional regulator MraZ from Marinobacter nauticus (strain ATCC 700491 / DSM 11845 / VT8) (Marinobacter aquaeolei).